The following is an 886-amino-acid chain: Vam6/Vps39-like protein (886 aa).

One can recognise a CNH domain in the interval 15-294 (PLQIDCLAAW…RFITSGGSNI (280 aa)). The stretch at 573–750 (FTEDLPEVES…LLRMYLSPPS (178 aa)) is one CHCR repeat.

The protein belongs to the VAM6/VPS39 family. As to quaternary structure, homooligomer. Interacts with TGFBR2 and, less efficiently, with TGFBR1; interaction with TGFBR2 is independent of the receptor kinase activity and of the presence of TGF-beta. Also interacts with ACVR2B, but not with BMPR2. Interacts with SMAD4, preferentially following TGF-beta treatment. Does not interact with SAMD2 or SMAD3. Component of the homotypic fusion and vacuole protein sorting (HOPS) complex; the core of which composed of the class C Vps proteins VPS11, VPS16, VPS18 and VPS33A, is associated with VPS39 and VPS41. Interacts with PLEKHM2; involved in VPS39 recruitment to ARL8B-containing lysosomes. Associates with adapter protein complex 3 (AP-3) and clathrin:AP-3 complexes. Interacts with STX17; this interaction is increased in the absence of TMEM39A. Interacts with RAB7, RAB2A and RAB2B. Interacts with RAB2A (GTP-bound); the interaction contributes to obtaining a functional HOPS complex that promotes autophagosome-lysosome membrane fusion driven by STX17-SNAP29-VAMP8. Interacts with RAB39A (GTP-bound) and RAB39B (GTP-bound); interaction with RAB39A contributes to obtaining a functional HOPS complex. In terms of assembly, (Microbial infection) Interacts with SARS coronavirus-2/SARS-CoV-2 ORF3A protein; the interaction is direct and sequestrates VPS39, thereby preventing HOPS complex from interacting with the autophagosomal SNARE protein STX17. ORF3A enhances the interaction of VPS39 with VPS11 and VPS18, while its interaction with the VPS16:VPS33A module is attenuated. In terms of tissue distribution, widely expressed, with highest levels in heart, skeletal muscle, kidney, pancreas, brain, placenta and spleen.

Its subcellular location is the cytoplasm. It is found in the lysosome membrane. The protein resides in the late endosome membrane. Its function is as follows. Regulator of TGF-beta/activin signaling, inhibiting SMAD3- and activating SMAD2-dependent transcription. Acts by interfering with SMAD3/SMAD4 complex formation, this would lead to inhibition of SMAD3-dependent transcription and relieve SMAD3 inhibition of SMAD2-dependent promoters, thus increasing SMAD2-dependent transcription. Does not affect TGF-beta-induced SMAD2 or SMAD3 phosphorylation, nor SMAD2/SMAD4 complex formation. Functionally, plays a role in vesicle-mediated protein trafficking to lysosomal compartments including the endocytic membrane transport and autophagic pathways. Acts as a component of the HOPS endosomal tethering complex. This complex is proposed to be involved in the Rab5-to-Rab7 endosome conversion probably implicating MON1A/B, and via binding SNAREs and SNARE complexes to mediate tethering and docking events during SNARE-mediated membrane fusion. The HOPS complex is proposed to be recruited to Rab7 on the late endosomal membrane and to regulate late endocytic, phagocytic and autophagic traffic towards lysosomes. Involved in homotypic vesicle fusions between late endosomes and in heterotypic fusions between late endosomes and lysosomes. Required for fusion of endosomes and autophagosomes with lysosomes. This chain is Vam6/Vps39-like protein, found in Homo sapiens (Human).